We begin with the raw amino-acid sequence, 204 residues long: Vacuolar protein-sorting-associated protein 46 (204 aa).

The segment at Met1 to Met103 is interaction with VSP24. At Ser5 the chain carries Phosphoserine. Coiled-coil stretches lie at residues Leu9–Ala56 and Asn109–Leu129. The segment at Asp104–Gly204 is interaction with VSP4. The segment at Asn176 to Gly204 is interaction with VTA1. Basic and acidic residues predominate over residues Val185–Ala196. Residues Val185–Gly204 form a disordered region.

This sequence belongs to the SNF7 family. Self-associates. Interacts with VPS4 and VTA1. Interacts with IST1.

The protein resides in the endosome membrane. Its subcellular location is the endomembrane system. Its function is as follows. Class E VPS protein implicated in concentration and sorting of cargo proteins of the multivesicular body (MVB) for incorporation into intralumenal vesicles. The lumenal sequestrated membrane proteins will be targeted into the vacuole after fusion of the endosome with the vacuole. Probably acts as a peripherally associated component of the ESCRT-III complex, which appears to be critical for late steps in MVB sorting, such as membrane invagination and final cargo sorting and recruits late-acting components of the sorting machinery. The MVB pathway requires the sequential function of ESCRT-O, -I,-II and -III complex assemblies. Regulates the membrane association of VPS4. Can stimulate VPS4 ATPase activity directly or via VTA1. This Saccharomyces cerevisiae (strain ATCC 204508 / S288c) (Baker's yeast) protein is Vacuolar protein-sorting-associated protein 46 (DID2).